Consider the following 245-residue polypeptide: Probable ABC transporter ATP-binding protein p29 (245 aa).

One can recognise an ABC transporter domain in the interval 7 to 245; that stretch reads LSFEKVSIIY…KEQLYKIYDN (239 aa). 39 to 46 is a binding site for ATP; the sequence is GKSGVGKS.

Belongs to the ABC transporter superfamily.

Part of a high-affinity transport system. The protein is Probable ABC transporter ATP-binding protein p29 (p29) of Mycoplasma genitalium (strain ATCC 33530 / DSM 19775 / NCTC 10195 / G37) (Mycoplasmoides genitalium).